Reading from the N-terminus, the 450-residue chain is Phosphoglucosamine mutase (450 aa).

Catalysis depends on serine 102, which acts as the Phosphoserine intermediate. 4 residues coordinate Mg(2+): serine 102, aspartate 243, aspartate 245, and aspartate 247. Serine 102 is subject to Phosphoserine.

This sequence belongs to the phosphohexose mutase family. Requires Mg(2+) as cofactor. In terms of processing, activated by phosphorylation.

It catalyses the reaction alpha-D-glucosamine 1-phosphate = D-glucosamine 6-phosphate. Catalyzes the conversion of glucosamine-6-phosphate to glucosamine-1-phosphate. In Rhizobium etli (strain CIAT 652), this protein is Phosphoglucosamine mutase.